Reading from the N-terminus, the 30-residue chain is Cycloviolacin-H3 (30 aa).

Residues Gly-1 to Asn-30 constitute a cross-link (cyclopeptide (Gly-Asn)). 3 cysteine pairs are disulfide-bonded: Cys-5-Cys-19, Cys-9-Cys-21, and Cys-14-Cys-27.

This is a cyclic peptide.

Probably participates in a plant defense mechanism. The sequence is that of Cycloviolacin-H3 from Viola hederacea (Australian violet).